The sequence spans 1663 residues: Glutamine-rich protein 2 (1663 aa).

Disordered regions lie at residues 80-239 (HGGF…LVPA), 423-481 (GLVQ…GTGQ), 575-615 (AQPR…QHGL), 880-925 (TYQQ…QVYP), and 948-984 (RGPG…APGQ). Composition is skewed to polar residues over residues 84-103 (TSLT…QPSI) and 131-150 (GVSS…QQQP). A compositionally biased stretch (basic and acidic residues) spans 171–182 (SDSDRHRSREKL). A compositionally biased stretch (low complexity) spans 206 to 217 (QPSSVPASQSQV). The span at 958 to 975 (HGQEGLDPNRTRASDRHG) shows a compositional bias: basic and acidic residues. Coiled-coil stretches lie at residues 1085-1160 (KTVK…MENS) and 1286-1325 (EDHR…KADK). Residues 1609-1619 (TRLPGILRKDS) are compositionally biased toward basic and acidic residues. The tract at residues 1609–1663 (TRLPGILRKDSSGTSKRKSQQPRPHVHRPPSLSSNGQLPSRPQSAQISAGNTSER) is disordered. Residues 1623-1636 (SKRKSQQPRPHVHR) show a composition bias toward basic residues. Positions 1639–1663 (SLSSNGQLPSRPQSAQISAGNTSER) are enriched in polar residues.

Interacts with AKAP3, ODF2 and TSSK4. Interacts with AKAP4. In terms of tissue distribution, expressed in the sperm.

It localises to the nucleus membrane. The protein localises to the nucleus. Its subcellular location is the cytoplasm. The protein resides in the cell projection. It is found in the cilium. It localises to the flagellum. Functionally, has an essential role in the formation of sperm flagella and flagellar structure maintainance. It acts as a suppressor of ubiquitination and degradation of proteins involved in flagellar development and motility. The sequence is that of Glutamine-rich protein 2 (QRICH2) from Homo sapiens (Human).